A 209-amino-acid polypeptide reads, in one-letter code: Uracil phosphoribosyltransferase (209 aa).

5-phospho-alpha-D-ribose 1-diphosphate is bound by residues arginine 79, arginine 104, and aspartate 131 to serine 139. Residues isoleucine 194 and glycine 199–alanine 201 contribute to the uracil site. Residue aspartate 200 coordinates 5-phospho-alpha-D-ribose 1-diphosphate.

The protein belongs to the UPRTase family. Mg(2+) serves as cofactor.

The catalysed reaction is UMP + diphosphate = 5-phospho-alpha-D-ribose 1-diphosphate + uracil. The protein operates within pyrimidine metabolism; UMP biosynthesis via salvage pathway; UMP from uracil: step 1/1. Allosterically activated by GTP. Catalyzes the conversion of uracil and 5-phospho-alpha-D-ribose 1-diphosphate (PRPP) to UMP and diphosphate. The sequence is that of Uracil phosphoribosyltransferase from Clostridium kluyveri (strain NBRC 12016).